The following is a 121-amino-acid chain: uncharacterized protein (121 aa).

A disordered region spans residues 85 to 111; sequence NANNDDYESPYKTPKIKSNPSLDSSGS. The span at 100-111 shows a compositional bias: polar residues; that stretch reads IKSNPSLDSSGS.

This is an uncharacterized protein from Dictyostelium discoideum (Social amoeba).